A 540-amino-acid chain; its full sequence is V-set and immunoglobulin domain-containing protein 10 (540 aa).

An N-terminal signal peptide occupies residues 1–30 (MAAGGSAPEPRVLVCLGALLAGWVAVGLEA). Ig-like C2-type domains lie at 31–119 (VVIG…WLQV), 123–215 (PYQI…RKVT), 223–309 (PPPS…VQIR), and 311–404 (PSLL…IWLS). Over 31 to 413 (VVIGEVHENV…SVKEPLNIGG (383 aa)) the chain is Extracellular. 8 N-linked (GlcNAc...) asparagine glycosylation sites follow: Asn39, Asn46, Asn70, Asn108, Asn138, Asn171, Asn180, and Asn198. Cys44 and Cys103 are disulfide-bonded. 2 disulfide bridges follow: Cys153–Cys201 and Cys245–Cys290. The N-linked (GlcNAc...) asparagine glycan is linked to Asn326. Cys331 and Cys388 form a disulfide bridge. The chain crosses the membrane as a helical span at residues 414 to 434 (IVGTIVSLLLLGLAIISGLLL). Topologically, residues 435-540 (HYSPVFCWKV…DIVQEEDRPV (106 aa)) are cytoplasmic. Residues 461–477 (DSEEEEEEEEEEEEDAA) are compositionally biased toward acidic residues. 2 disordered regions span residues 461 to 500 (DSEE…QDHI) and 513 to 540 (QMGN…DRPV). The segment covering 482-500 (EGAREREELPKEIPKQDHI) has biased composition (basic and acidic residues). A compositionally biased stretch (acidic residues) spans 521 to 534 (LQDDSSEEQSDIVQ).

The protein resides in the membrane. This Homo sapiens (Human) protein is V-set and immunoglobulin domain-containing protein 10 (VSIG10).